The primary structure comprises 364 residues: DNA polymerase IV (364 aa).

The UmuC domain maps to 14 to 198 (IIHIDMDAFF…LPIEKFHGVG (185 aa)). Residues Asp18 and Asp116 each contribute to the Mg(2+) site. Residue Glu117 is part of the active site.

This sequence belongs to the DNA polymerase type-Y family. In terms of assembly, monomer. Mg(2+) serves as cofactor.

It localises to the cytoplasm. The enzyme catalyses DNA(n) + a 2'-deoxyribonucleoside 5'-triphosphate = DNA(n+1) + diphosphate. Functionally, poorly processive, error-prone DNA polymerase involved in untargeted mutagenesis. Copies undamaged DNA at stalled replication forks, which arise in vivo from mismatched or misaligned primer ends. These misaligned primers can be extended by PolIV. Exhibits no 3'-5' exonuclease (proofreading) activity. May be involved in translesional synthesis, in conjunction with the beta clamp from PolIII. This is DNA polymerase IV from Streptococcus pyogenes serotype M6 (strain ATCC BAA-946 / MGAS10394).